The following is a 1698-amino-acid chain: Helicase swr1 (1698 aa).

Positions 1–249 (MQNGTTIGIP…NDGQDEHGQR (249 aa)) are disordered. Over residues 12–21 (ENERVTERAE) the composition is skewed to basic and acidic residues. Residues 28 to 41 (LPNNSPVNSPTIDP) show a composition bias toward polar residues. Residues 45–59 (EIKDVAADHNEEPPS) are compositionally biased toward basic and acidic residues. Positions 120 to 140 (TRSSQKQYVSKAVSSQRNAAV) are enriched in polar residues. Positions 209–222 (TPRSNSTKTRSTRS) are enriched in low complexity. The HSA domain occupies 329–403 (PEPQEELPQQ…EEMRGKRKQL (75 aa)). Disordered regions lie at residues 456-682 (ILGE…LSTP) and 763-818 (QQHE…TPIP). Composition is skewed to acidic residues over residues 468–507 (TTDDEEVETDNGSENDDEEGESNMSTETEEEDGDDRDDDV), 534–545 (SDEDSEDSDDIA), and 570–611 (ELDE…EDGG). The segment covering 625 to 642 (SLSNLHQTNSGEGDTHQT) has biased composition (polar residues). Acidic residues predominate over residues 652–666 (SSFDESEFGSEDPDE). Positions 673-682 (GPTNKDLSTP) are enriched in polar residues. The Helicase ATP-binding domain occupies 837–1002 (AGLYSNHING…WSLLFFLMPT (166 aa)). 850 to 857 (DEMGLGKT) is a binding site for ATP. The DEAH box motif lies at 953 to 956 (DEAH). Positions 1377–1527 (RLDKLLRDLK…DVVIQEGEFT (151 aa)) constitute a Helicase C-terminal domain. The span at 1586–1600 (KELEHADDGDFDDRA) shows a compositional bias: basic and acidic residues. 2 disordered regions span residues 1586 to 1632 (KELE…PDEA) and 1673 to 1698 (PLVLPVDKSMKKSKKGKEHRLRKRRR). Residues 1601 to 1618 (NANASGVTAASASASGAG) show a composition bias toward low complexity. Over residues 1683–1698 (KKSKKGKEHRLRKRRR) the composition is skewed to basic residues.

It belongs to the SNF2/RAD54 helicase family. SWR1 subfamily. In terms of assembly, component of the SWR1 chromatin-remodeling complex.

The protein resides in the nucleus. The enzyme catalyses ATP + H2O = ADP + phosphate + H(+). In terms of biological role, catalytic component of the SWR1 complex which mediates the ATP-dependent exchange of histone H2A for the H2A variant HZT1 leading to transcriptional regulation of selected genes by chromatin remodeling. This is Helicase swr1 (swr1) from Emericella nidulans (strain FGSC A4 / ATCC 38163 / CBS 112.46 / NRRL 194 / M139) (Aspergillus nidulans).